The primary structure comprises 313 residues: Aspartate carbamoyltransferase catalytic subunit (313 aa).

The carbamoyl phosphate site is built by arginine 59 and threonine 60. Lysine 87 provides a ligand contact to L-aspartate. Carbamoyl phosphate contacts are provided by arginine 109, histidine 137, and glutamine 140. L-aspartate contacts are provided by arginine 170 and arginine 224. Residues glycine 265 and proline 266 each coordinate carbamoyl phosphate.

The protein belongs to the aspartate/ornithine carbamoyltransferase superfamily. ATCase family. Heterododecamer (2C3:3R2) of six catalytic PyrB chains organized as two trimers (C3), and six regulatory PyrI chains organized as three dimers (R2).

It carries out the reaction carbamoyl phosphate + L-aspartate = N-carbamoyl-L-aspartate + phosphate + H(+). It functions in the pathway pyrimidine metabolism; UMP biosynthesis via de novo pathway; (S)-dihydroorotate from bicarbonate: step 2/3. In terms of biological role, catalyzes the condensation of carbamoyl phosphate and aspartate to form carbamoyl aspartate and inorganic phosphate, the committed step in the de novo pyrimidine nucleotide biosynthesis pathway. This Agrobacterium fabrum (strain C58 / ATCC 33970) (Agrobacterium tumefaciens (strain C58)) protein is Aspartate carbamoyltransferase catalytic subunit.